The sequence spans 150 residues: Large ribosomal subunit protein bL9 (150 aa).

It belongs to the bacterial ribosomal protein bL9 family.

Binds to the 23S rRNA. The sequence is that of Large ribosomal subunit protein bL9 from Corynebacterium glutamicum (strain ATCC 13032 / DSM 20300 / JCM 1318 / BCRC 11384 / CCUG 27702 / LMG 3730 / NBRC 12168 / NCIMB 10025 / NRRL B-2784 / 534).